Here is a 647-residue protein sequence, read N- to C-terminus: Methyl-accepting chemotaxis protein McpK (647 aa).

Residues 1–16 lie on the Cytoplasmic side of the membrane; the sequence is MYDWWVLQLAKLSVSR. Residues 17–37 traverse the membrane as a helical segment; it reads KLMVGFGVLLALLLLVVISSN. Residues 38–291 are Periplasmic-facing; that stretch reads RTLTHQTALS…LRESTASRDR (254 aa). The region spanning 45–287 is the HBM domain; sequence ALSEQLAEVA…AGRQLRESTA (243 aa). Residues 292-312 traverse the membrane as a helical segment; sequence ASLWLIAALALAFGCVAGWAI. The Cytoplasmic portion of the chain corresponds to 313-647; it reads NRQIVRPLDE…LQAQVGRFRL (335 aa). The HAMP domain maps to 314 to 370; that stretch reads RQIVRPLDEALAQAEAIAAGDLGKRPQNPLTLQRRDELGQLQRVMQRMGDSLRELVG. The region spanning 375-611 is the Methyl-accepting transducer domain; that stretch reads GVSQLASSAE…EINRSVLSVR (237 aa).

Belongs to the methyl-accepting chemotaxis (MCP) protein family. Ligand free ligand-binding domain (LBD) is present in a monomer-dimer equilibrium. AlphaKG binding stabilizes the homodimer.

It localises to the cell inner membrane. Its function is as follows. Chemotactic-signal transducers respond to changes in the concentration of attractants and repellents in the environment, transduce a signal from the outside to the inside of the cell, and facilitate sensory adaptation through the variation of the level of methylation. McpK is a chemoreceptor that specifically binds and mediates chemotaxis to alpha-ketoglutarate (alphaKG). The chain is Methyl-accepting chemotaxis protein McpK from Pseudomonas aeruginosa (strain ATCC 15692 / DSM 22644 / CIP 104116 / JCM 14847 / LMG 12228 / 1C / PRS 101 / PAO1).